A 302-amino-acid polypeptide reads, in one-letter code: Troponin T, cardiac muscle isoforms (302 aa).

Positions 1–55 (MSDSEEVVEEYEQEQEEEYVEEEEEEWLEEDDGQEDQVDEEEEETEETTAEEQED) are enriched in acidic residues. 3 disordered regions span residues 1-99 (MSDS…GERL), 138-230 (KDRI…RKPL), and 280-302 (SDHQ…GRWK). At serine 2 the chain carries N-acetylserine. Serine 2 carries the post-translational modification Phosphoserine; by CK2. Positions 65–79 (EGDREQEPGEGESKP) are enriched in basic and acidic residues. Pro residues predominate over residues 82–93 (KPFMPNLVPPKI). 2 stretches are compositionally biased toward basic and acidic residues: residues 138–186 (KDRI…EKEA) and 204–230 (KSEK…RKPL).

The protein belongs to the troponin T family.

In terms of biological role, troponin T is the tropomyosin-binding subunit of troponin, the thin filament regulatory complex which confers calcium-sensitivity to striated muscle actomyosin ATPase activity. The chain is Troponin T, cardiac muscle isoforms (TNNT2) from Gallus gallus (Chicken).